A 404-amino-acid chain; its full sequence is Probable mannosyltransferase KTR3 (404 aa).

Topologically, residues 1 to 27 (MSVHHKKKLMPKSALLIRKYQKGIRSS) are cytoplasmic. Residues 28 to 44 (FIGLIIVLSFLFFMSGS) traverse the membrane as a helical; Signal-anchor for type II membrane protein segment. Positions 45–83 (RSPEVPIAQGTSVSRVASKDYLMPFTDKSQGVIHPVDDG) are stem region. Residues 45 to 404 (RSPEVPIAQG…AGNYKLPPGI (360 aa)) lie on the Lumenal side of the membrane. Residues 84–404 (KKEKGVMVTL…AGNYKLPPGI (321 aa)) are catalytic. The active-site Nucleophile is glutamate 295.

It belongs to the glycosyltransferase 15 family. In terms of assembly, interacts with SVP26.

It is found in the membrane. Its function is as follows. Possible glycosyltransferase that transfers an alpha-D-mannosyl residue from GDP-mannose into lipid-linked oligosaccharide, forming an alpha-(1-&gt;2)-D-mannosyl-D-mannose linkage. This Saccharomyces cerevisiae (strain ATCC 204508 / S288c) (Baker's yeast) protein is Probable mannosyltransferase KTR3 (KTR3).